Here is a 727-residue protein sequence, read N- to C-terminus: Elongation factor 2 (727 aa).

In terms of domain architecture, tr-type G spans D19 to L260. GTP contacts are provided by residues A28 to T35, D94 to H98, and N148 to D151. H603 is subject to Diphthamide.

Belongs to the TRAFAC class translation factor GTPase superfamily. Classic translation factor GTPase family. EF-G/EF-2 subfamily.

Its subcellular location is the cytoplasm. Its function is as follows. Catalyzes the GTP-dependent ribosomal translocation step during translation elongation. During this step, the ribosome changes from the pre-translocational (PRE) to the post-translocational (POST) state as the newly formed A-site-bound peptidyl-tRNA and P-site-bound deacylated tRNA move to the P and E sites, respectively. Catalyzes the coordinated movement of the two tRNA molecules, the mRNA and conformational changes in the ribosome. In Methanococcus vannielii (strain ATCC 35089 / DSM 1224 / JCM 13029 / OCM 148 / SB), this protein is Elongation factor 2 (fusA).